The primary structure comprises 571 residues: Hemagglutinin-neuraminidase (571 aa).

Residues 1 to 26 lie on the Intravirion side of the membrane; it reads MDRAVNRVVLENEEREAKNTWRLVFR. The helical transmembrane segment at 27 to 47 threads the bilayer; it reads IAVLLLMVMTLAISAAALVYS. Topologically, residues 48–571 are virion surface; that stretch reads MGASTPRDLA…LVEILKDDRV (524 aa). A glycan (N-linked (GlcNAc...) asparagine; by host) is linked at Asn119. An important for interaction with fusion/F protein region spans residues 124-152; the sequence is GEPVHDPDYIGGIGKELIVDDISDVTSFY. Disulfide bonds link Cys172-Cys196, Cys186-Cys247, and Cys238-Cys251. An involved in neuraminidase activity region spans residues 234-239; the sequence is NRKSCS. N-linked (GlcNAc...) asparagine; by host glycosylation is found at Asn341 and Asn433. 2 cysteine pairs are disulfide-bonded: Cys344–Cys461 and Cys455–Cys465. N-linked (GlcNAc...) asparagine; by host glycosylation is found at Asn481, Asn508, and Asn538. An intrachain disulfide couples Cys531 to Cys542.

Belongs to the paramyxoviruses hemagglutinin-neuraminidase family. As to quaternary structure, homotetramer; composed of disulfide-linked homodimers. Interacts with F protein trimer. Interacts with host CG-1B; this interaction inhibits viral adsorption and replication rather than internalization.

Its subcellular location is the virion membrane. It localises to the host cell membrane. It catalyses the reaction Hydrolysis of alpha-(2-&gt;3)-, alpha-(2-&gt;6)-, alpha-(2-&gt;8)- glycosidic linkages of terminal sialic acid residues in oligosaccharides, glycoproteins, glycolipids, colominic acid and synthetic substrates.. Mediates the viral entry into the host cell together with fusion/F protein. Attaches the virus to sialic acid-containing cell receptors and thereby initiates infection. Binding of HN protein to the receptor induces a conformational change that allows the F protein to trigger virion/cell membranes fusion. Functionally, neuraminidase activity ensures the efficient spread of the virus by dissociating the mature virions from the neuraminic acid containing glycoproteins. This Gallus gallus (Chicken) protein is Hemagglutinin-neuraminidase (HN).